The following is a 194-amino-acid chain: dCTP deaminase (194 aa).

DCTP is bound by residues 110–115 (RSSLAR), Asp-128, 136–138 (VLE), Tyr-171, Lys-178, and Gln-182. The active-site Proton donor/acceptor is Glu-138. Residues 172 to 194 (NKRKSAKYRDQQEAVASRISQDK) are disordered.

Belongs to the dCTP deaminase family. Homotrimer.

It carries out the reaction dCTP + H2O + H(+) = dUTP + NH4(+). It functions in the pathway pyrimidine metabolism; dUMP biosynthesis; dUMP from dCTP (dUTP route): step 1/2. Catalyzes the deamination of dCTP to dUTP. The chain is dCTP deaminase from Shewanella loihica (strain ATCC BAA-1088 / PV-4).